The following is a 719-amino-acid chain: Polyribonucleotide nucleotidyltransferase (719 aa).

The Mg(2+) site is built by aspartate 507 and aspartate 513. The region spanning 573–633 (PKLELFSVDP…EQIKAAKDYI (61 aa)) is the KH domain. The region spanning 658–719 (GQEFQGIVKK…NGKISVDLCE (62 aa)) is the S1 motif domain.

This sequence belongs to the polyribonucleotide nucleotidyltransferase family. It depends on Mg(2+) as a cofactor.

It localises to the cytoplasm. The catalysed reaction is RNA(n+1) + phosphate = RNA(n) + a ribonucleoside 5'-diphosphate. Its function is as follows. Involved in mRNA degradation. Catalyzes the phosphorolysis of single-stranded polyribonucleotides processively in the 3'- to 5'-direction. The polypeptide is Polyribonucleotide nucleotidyltransferase (Campylobacter jejuni subsp. jejuni serotype O:2 (strain ATCC 700819 / NCTC 11168)).